Reading from the N-terminus, the 514-residue chain is Activin receptor type-2A (514 aa).

The first 20 residues, 1-20 (MGAATKLAFAVFLISCSSAG), serve as a signal peptide directing secretion. The Extracellular portion of the chain corresponds to 21–136 (SILGRSETKE…TSNPVTTKPP (116 aa)). 5 cysteine pairs are disulfide-bonded: Cys31–Cys61, Cys51–Cys79, Cys86–Cys105, Cys92–Cys104, and Cys106–Cys111. 3 N-linked (GlcNAc...) asparagine glycosylation sites follow: Asn46, Asn67, and Asn88. A helical membrane pass occupies residues 137–162 (LFNTLLYSLVPIMVVAVIVLFSFWMY). Residues 163–514 (RHHKLAYPPV…VDFPPKESSL (352 aa)) are Cytoplasmic-facing. In terms of domain architecture, Protein kinase spans 193 to 486 (LQLLEVKARG…EERIIQMQKL (294 aa)). Residues 199 to 207 (KARGRFGCV) and Lys220 each bind ATP. The Proton acceptor role is filled by Asp323.

This sequence belongs to the protein kinase superfamily. TKL Ser/Thr protein kinase family. TGFB receptor subfamily.

Its subcellular location is the cell membrane. It carries out the reaction L-threonyl-[receptor-protein] + ATP = O-phospho-L-threonyl-[receptor-protein] + ADP + H(+). It catalyses the reaction L-seryl-[receptor-protein] + ATP = O-phospho-L-seryl-[receptor-protein] + ADP + H(+). Its function is as follows. Receptor for activin A, activin B and inhibin A. Involved in transmembrane signaling. This chain is Activin receptor type-2A (acvr2a), found in Xenopus laevis (African clawed frog).